Consider the following 672-residue polypeptide: Protein seu-1 (672 aa).

Disordered regions lie at residues 1–463 and 576–672; these read MSSI…AGTE and LAPP…LKHL. Residues 8-20 are compositionally biased toward basic and acidic residues; the sequence is NDNRRPTFRDHRT. Gly residues predominate over residues 25-34; that stretch reads GRGGSGGGGR. The span at 62–85 shows a compositional bias: basic and acidic residues; sequence RSQDHRQRSPEVRRHRSPEKESKD. The segment covering 87–105 has biased composition (low complexity); sequence VVTSTGSSRGATSASVTSS. 4 stretches are compositionally biased toward basic and acidic residues: residues 107–138, 189–226, 234–268, and 289–306; these read RRHE…DADR, VSRH…KSNG, RRRE…KVED, and EQAK…ESHQ. Residues 307 to 317 show a composition bias toward low complexity; sequence SAHSAAVSNAS. Acidic residues predominate over residues 322 to 343; sequence SEEELDYEEDDIDVDLDGDIDV. 6 stretches are compositionally biased toward basic and acidic residues: residues 366-375, 382-396, 410-424, 436-447, 607-626, and 636-659; these read NDVKDETMEE, PEKK…DDKD, RRED…SDHH, RATDHKESRRSE, SFGD…RHMD, and DHRV…ERGF.

In terms of tissue distribution, highly expressed in intestinal cells, lateral hypodermal (seam) cells, Pn.p ventral hypodermal cells, and spermatheca. Expressed at low levels in the ventral nerve cord.

The protein resides in the nucleus. Its function is as follows. Together with unc-5, involved in touch neuron axon guidance. During gonad morphogenesis, plays a role in the unc-5-/unc-6-mediated migration of distal tip cells along the body. The protein is Protein seu-1 of Caenorhabditis elegans.